Consider the following 1327-residue polypeptide: P-glycoprotein 14 (1327 aa).

Basic and acidic residues predominate over residues Met-1–Arg-17. Residues Met-1–Thr-23 form a disordered region. The Cytoplasmic portion of the chain corresponds to Met-1 to Leu-104. Residues Leu-105–Val-125 traverse the membrane as a helical segment. One can recognise an ABC transmembrane type-1 1 domain in the interval Phe-106–Asn-394. At Ser-126–Val-151 the chain is on the extracellular side. A helical transmembrane segment spans residues Tyr-152–Phe-172. At Gln-173–Lys-225 the chain is on the cytoplasmic side. The helical transmembrane segment at Leu-226–Tyr-246 threads the bilayer. A topological domain (extracellular) is located at residue Glu-247. The helical transmembrane segment at Trp-248 to Leu-268 threads the bilayer. The Cytoplasmic portion of the chain corresponds to Ala-269–Ser-331. Residues Gly-332–Tyr-352 form a helical membrane-spanning segment. Topologically, residues Gly-353–Thr-364 are extracellular. A helical transmembrane segment spans residues Pro-365–Ile-385. The Cytoplasmic portion of the chain corresponds to Ser-386–Phe-766. The region spanning Val-429 to Ala-665 is the ABC transporter 1 domain. Gly-464–Ser-471 is an ATP binding site. Positions Asp-671 to Lys-721 are disordered. Residues Glu-673–Asp-686 show a composition bias toward acidic residues. The segment covering Arg-694–Ser-704 has biased composition (low complexity). The span at Asn-711–Lys-721 shows a compositional bias: polar residues. The 288-residue stretch at Phe-766 to Lys-1053 folds into the ABC transmembrane type-1 2 domain. The helical transmembrane segment at Leu-767–Val-789 threads the bilayer. Residues Phe-790 to Arg-805 are Extracellular-facing. The chain crosses the membrane as a helical span at residues Met-806–Ala-826. The Cytoplasmic portion of the chain corresponds to Ser-827 to Arg-886. A helical transmembrane segment spans residues Met-887–Tyr-907. Over Cys-908–Gln-910 the chain is Extracellular. A helical transmembrane segment spans residues Ile-911–Tyr-931. Residues Lys-932–Ser-996 are Cytoplasmic-facing. Residues Leu-997–Ile-1017 traverse the membrane as a helical segment. Topologically, residues Tyr-1018–Gly-1030 are extracellular. A helical membrane pass occupies residues Ile-1031–Phe-1051. At Val-1052 to Val-1327 the chain is on the cytoplasmic side. Residues Ile-1086–Lys-1322 enclose the ABC transporter 2 domain. Gly-1121 to Ser-1128 contacts ATP.

It belongs to the ABC transporter superfamily. ABCB family. Multidrug resistance exporter (TC 3.A.1.201) subfamily. As to expression, expressed in pharyngeal epithelial cells that surround the anterior pharyngeal cuticle. Shares same expression pattern as sms-5.

Its subcellular location is the apical cell membrane. Its function is as follows. Contributes to the establishment of a polar lipid barrier to block small molecule passage into the pharyngeal cuticle. Probably exports polar lipids into the developing pharyngeal cuticle to protect against xenobiotic insult. Likely functions in the same pathway as sphingomyelin synthase sms-5. The protein is P-glycoprotein 14 of Caenorhabditis elegans.